A 138-amino-acid chain; its full sequence is Bis(5'-nucleosyl)-tetraphosphatase [asymmetrical] (138 aa).

Positions 1 to 132 (MVVKAAGLVI…EMGSLLRKFS (132 aa)) constitute a Nudix hydrolase domain. Positions 37 to 58 (GHVDPGEDEWQAAIRETKEEAN) match the Nudix box motif.

It belongs to the Nudix hydrolase family. Monomer. The cofactor is Mg(2+). Co(2+) is required as a cofactor. It depends on Mn(2+) as a cofactor. Zn(2+) serves as cofactor. Requires Ca(2+) as cofactor.

It catalyses the reaction P(1),P(4)-bis(5'-adenosyl) tetraphosphate + H2O = AMP + ATP + 2 H(+). Functionally, asymmetrically hydrolyzes Ap4A to yield AMP and ATP. The sequence is that of Bis(5'-nucleosyl)-tetraphosphatase [asymmetrical] (ndx-4) from Caenorhabditis elegans.